A 212-amino-acid polypeptide reads, in one-letter code: Ras-related protein Rab-2A (212 aa).

Residue Ala2 is modified to N-acetylalanine. Residues 2–19 (AYAYLFKYIIIGDTGVGK) form a required for interaction with PRKCI region. 7 residues coordinate GTP: Gly16, Val17, Gly18, Lys19, Ser20, Cys21, and Thr38. Ser20 lines the Mg(2+) pocket. The Switch 1 motif lies at 37 to 42 (LTIGVE). Thr38 and Asp61 together coordinate Mg(2+). The Switch 2 motif lies at 63–72 (AGQESFRSIT). Gly64, Asn119, Lys120, Asp122, Ala150, and Lys151 together coordinate GTP. The disordered stretch occupies residues 190–212 (QHAATNASHGSNQGGQQAGGGCC). A compositionally biased stretch (gly residues) spans 201-212 (NQGGQQAGGGCC). 2 S-geranylgeranyl cysteine lipidation sites follow: Cys211 and Cys212.

The protein belongs to the small GTPase superfamily. Rab family. In terms of assembly, interacts with PRKCI. Interacts with TRIP11. Interacts (in GTP-bound form) with GARIN1B. Interacts (GTP-bound) with HOPS complex component VPS39; interaction contributes to obtaining a functional HOPS complex that promotes autophagosome-lysosome membrane fusion driven by STX17-SNAP29-VAMP8. Interacts with VPS41. Requires Mg(2+) as cofactor. In terms of processing, prenylated. Prenylation is required for association with cellular membranes.

The protein resides in the endoplasmic reticulum-Golgi intermediate compartment membrane. Its subcellular location is the melanosome. The protein localises to the endoplasmic reticulum membrane. It localises to the golgi apparatus membrane. It is found in the cytoplasmic vesicle. The protein resides in the secretory vesicle. Its subcellular location is the acrosome. The protein localises to the autophagosome membrane. It catalyses the reaction GTP + H2O = GDP + phosphate + H(+). Regulated by guanine nucleotide exchange factors (GEFs) which promote the exchange of bound GDP for free GTP, GTPase activating proteins (GAPs) which increase the GTP hydrolysis activity, and GDP dissociation inhibitors (GDIs) which inhibit the dissociation of the nucleotide from the GTPase. The small GTPases Rab are key regulators of intracellular membrane trafficking, from the formation of transport vesicles to their fusion with membranes. Rabs cycle between active GTP-bound and inactive GDP-bound states. In their active state, drive transport of vesicular carriers from donor organelles to acceptor organelles to regulate the membrane traffic that maintains organelle identity and morphology. RAB2A regulates autophagy by promoting autophagosome-lysosome fusion via recruitment of the HOPS endosomal tethering complex; this process involves autophagosomal RAB2A and lysosomal RAB39A recruitment of HOPS subcomplexes VPS39-VPS11 and VPS41-VPS16-VPS18-VPS33A, respectively, which assemble into a functional complex to mediate membrane tethering and SNAREs-driven membrane fusion. Required for protein transport from the endoplasmic reticulum to the Golgi complex. Regulates the compacted morphology of the Golgi. Together with RAB2B, redundantly required for efficient autophagic flux. This Mus musculus (Mouse) protein is Ras-related protein Rab-2A.